The chain runs to 424 residues: Glutamate-1-semialdehyde 2,1-aminomutase (424 aa).

Lys258 is modified (N6-(pyridoxal phosphate)lysine).

It belongs to the class-III pyridoxal-phosphate-dependent aminotransferase family. HemL subfamily. The cofactor is pyridoxal 5'-phosphate.

The protein localises to the cytoplasm. It catalyses the reaction (S)-4-amino-5-oxopentanoate = 5-aminolevulinate. It participates in porphyrin-containing compound metabolism; protoporphyrin-IX biosynthesis; 5-aminolevulinate from L-glutamyl-tRNA(Glu): step 2/2. This chain is Glutamate-1-semialdehyde 2,1-aminomutase, found in Pyrobaculum islandicum (strain DSM 4184 / JCM 9189 / GEO3).